The primary structure comprises 544 residues: MNSFSFDGSDLLAKSDATDNVRAFSVSEISGALKRTVEDAFSHIRVRGEISGFTQAGSGHCYLALKDDKAVLDSVIWRGVVSRISFRPENGMEVIATGRLTTYAGRSRYQLVIEQLEIAGQGALMALLDRRRRMLAEEGLFNADRKRALPFMPKIIGVVSSPSGAVIRDILHRLADRCPTHVILWPVPVQGDQAAAKVAAAVRGFSALKAGDAIPRPDLLIVARGGGSLEDLWPFNEEILVRAVAESSIPVISAVGHETDTTLCDYAADLRAPTPTAAAELAVPVRSELVNGLNNLHLRMNNAIARHAKLSEERLEAVRRRLPDGERLLAPFIQLFDDRASQLERDISERMTHARHKLNFYAATLRPALLQARIAREQARLSACRLPTGQRLVIQEQQKLDNVTRRLKQAYQQRLSHADLRFKFLAEKLQPLLLEQRWQQKAELLAACSLKPELVTARLNIWQKNIDQLWRVAEQAHPDKILAKGYARVEDSHSHVVSNAHDAKTHKRLNLIFHDGSVWVAPETPPKSRKADNPPEPPEQTSFL.

A disordered region spans residues 522 to 544 (PETPPKSRKADNPPEPPEQTSFL).

This sequence belongs to the XseA family. As to quaternary structure, heterooligomer composed of large and small subunits.

It is found in the cytoplasm. The enzyme catalyses Exonucleolytic cleavage in either 5'- to 3'- or 3'- to 5'-direction to yield nucleoside 5'-phosphates.. Its function is as follows. Bidirectionally degrades single-stranded DNA into large acid-insoluble oligonucleotides, which are then degraded further into small acid-soluble oligonucleotides. This is Exodeoxyribonuclease 7 large subunit from Zymomonas mobilis subsp. mobilis (strain ATCC 31821 / ZM4 / CP4).